The following is a 336-amino-acid chain: Probable G-protein coupled receptor 160 (336 aa).

Topologically, residues 1–21 (MTALPSKNCSFQYQSHQAPRS) are extracellular. Residue asparagine 8 is glycosylated (N-linked (GlcNAc...) asparagine). A helical transmembrane segment spans residues 22 to 42 (LDATCLLLLIILGKVLLNVLI). Residues 43 to 56 (LRVKRKDTSWSFME) lie on the Cytoplasmic side of the membrane. Residues 57–77 (YFCFSLALVDLLLLVNISVLT) traverse the membrane as a helical segment. The Extracellular portion of the chain corresponds to 78–95 (YFRDFVVLGIRFTNYHIC). The helical transmembrane segment at 96–116 (LLTQIVSFAYGFLHYPVCSLA) threads the bilayer. Over 117-136 (CIDYWCNLSRATKPSSRWQK) the chain is Cytoplasmic. A helical transmembrane segment spans residues 137 to 157 (LLYLLTVILTWISVLAYVLGD). Residues 158-187 (PAISASLKTHKTSVNQCPSYVSTQSHWLSL) lie on the Extracellular side of the membrane. The chain crosses the membrane as a helical span at residues 188–208 (SMLMILSVAFLISWQEVVALI). Topologically, residues 209-243 (QAIRIASYKNKAVLYFPFPPHTSYTVSPRAVLLPR) are cytoplasmic. A helical transmembrane segment spans residues 244-264 (LIVCFLGTWFPFVALQVLILS). Residues 265-272 (LRVQIPAY) are Extracellular-facing. A helical transmembrane segment spans residues 273–293 (IEMNVPWLYFVNSFLIAAVYW). Residues 294 to 336 (FNCHKLYWRDGMFPVDPFINWKCCFVPVHRLKQVERPMSIIIC) are Cytoplasmic-facing.

This sequence belongs to the G-protein coupled receptor 1 family.

The protein localises to the cell membrane. In terms of biological role, orphan receptor. This chain is Probable G-protein coupled receptor 160 (Gpr160), found in Rattus norvegicus (Rat).